The chain runs to 1215 residues: von Willebrand factor A domain-containing protein 5B1 (1215 aa).

The signal sequence occupies residues 1–18 (MPGLLNCLTGAALPLMES). One can recognise a VIT domain in the interval 19-141 (DVTSYVSGYA…NVTVFISTSS (123 aa)). Residue Asn132 is glycosylated (N-linked (GlcNAc...) asparagine). Residues 353-532 (EFIFLIDRSN…KAMAPVLSDV (180 aa)) enclose the VWFA domain. The tract at residues 595–674 (SVFYPSQDEG…DPTGTARRYP (80 aa)) is disordered. 2 stretches are compositionally biased toward polar residues: residues 608-621 (GSGN…QGQT) and 646-667 (YSTN…SDPT). The residue at position 879 (Tyr879) is a Phosphotyrosine. Disordered stretches follow at residues 934–953 (GSSA…SSAA), 964–999 (QDSP…APSS), and 1100–1121 (SPQD…SLKS). Polar residues-rich tracts occupy residues 964–975 (QDSPTSTFNKTP), 990–999 (QNLSASAPSS), and 1100–1112 (SPQD…SSPP).

Its subcellular location is the secreted. This Mus musculus (Mouse) protein is von Willebrand factor A domain-containing protein 5B1 (Vwa5b1).